The following is a 636-amino-acid chain: Chaperone protein DnaK (636 aa).

Thr-196 is modified (phosphothreonine; by autocatalysis). The disordered stretch occupies residues 591–636 (LAEAMYKSSSQPGAQEAPPTDGQPKPDEKGKDNVVDAEFVDVDDKK). Over residues 614–624 (PKPDEKGKDNV) the composition is skewed to basic and acidic residues.

Belongs to the heat shock protein 70 family.

In terms of biological role, acts as a chaperone. The protein is Chaperone protein DnaK of Solibacter usitatus (strain Ellin6076).